Here is a 227-residue protein sequence, read N- to C-terminus: Thymidine kinase 1 (227 aa).

Residues 15-22 (GPMFSGKT), 47-49 (DTR), and 91-94 (DEGQ) contribute to the ATP site. Residue E92 is the Proton acceptor of the active site. F122 lines the substrate pocket. Zn(2+) contacts are provided by C147 and C150. Substrate contacts are provided by residues 166-170 (IELIG) and Y175. The Zn(2+) site is built by C179 and C182. The span at 187-196 (QNEGNSTKPS) shows a compositional bias: polar residues. Residues 187-227 (QNEGNSTKPSKTARHSHSQSAPSVAPLAVNINPDDHLNNDY) form a disordered region.

This sequence belongs to the thymidine kinase family. In terms of assembly, interacts with calmodulin in the presence of Ca(2+).

It catalyses the reaction thymidine + ATP = dTMP + ADP + H(+). The sequence is that of Thymidine kinase 1 from Dictyostelium discoideum (Social amoeba).